The chain runs to 460 residues: tRNA modification GTPase MnmE (460 aa).

(6S)-5-formyl-5,6,7,8-tetrahydrofolate-binding residues include R25, E87, and R126. The TrmE-type G domain occupies 221-381; that stretch reads GLKVAIVGRP…LETAIANLVQ (161 aa). N231 contacts K(+). Residues 231–236, 250–256, and 275–278 contribute to the GTP site; these read NVGKSS, TDLPGTT, and DTAG. S235 is a binding site for Mg(2+). The K(+) site is built by T250, L252, and T255. T256 lines the Mg(2+) pocket. Residue K460 coordinates (6S)-5-formyl-5,6,7,8-tetrahydrofolate.

The protein belongs to the TRAFAC class TrmE-Era-EngA-EngB-Septin-like GTPase superfamily. TrmE GTPase family. Homodimer. Heterotetramer of two MnmE and two MnmG subunits. Requires K(+) as cofactor.

The protein localises to the cytoplasm. Functionally, exhibits a very high intrinsic GTPase hydrolysis rate. Involved in the addition of a carboxymethylaminomethyl (cmnm) group at the wobble position (U34) of certain tRNAs, forming tRNA-cmnm(5)s(2)U34. This chain is tRNA modification GTPase MnmE, found in Picosynechococcus sp. (strain ATCC 27264 / PCC 7002 / PR-6) (Agmenellum quadruplicatum).